A 67-amino-acid polypeptide reads, in one-letter code: MKKDIHPDYKVCTVTCACGNSFETKSNVETLKIDICSSCHPFFTGEQKLVDAAGRVEKFKAKYNMAK.

Positions 16, 18, 36, and 39 each coordinate Zn(2+).

This sequence belongs to the bacterial ribosomal protein bL31 family. Type A subfamily. As to quaternary structure, part of the 50S ribosomal subunit. Zn(2+) is required as a cofactor.

Binds the 23S rRNA. This is Large ribosomal subunit protein bL31 from Aliarcobacter butzleri (strain RM4018) (Arcobacter butzleri).